The chain runs to 182 residues: Bifunctional protein PyrR (182 aa).

The PRPP-binding motif lies at 100–112 (VVLVDDVLYTGRT).

This sequence belongs to the purine/pyrimidine phosphoribosyltransferase family. PyrR subfamily. As to quaternary structure, homodimer and homohexamer; in equilibrium.

The enzyme catalyses UMP + diphosphate = 5-phospho-alpha-D-ribose 1-diphosphate + uracil. In terms of biological role, regulates transcriptional attenuation of the pyrimidine nucleotide (pyr) operon by binding in a uridine-dependent manner to specific sites on pyr mRNA. This disrupts an antiterminator hairpin in the RNA and favors formation of a downstream transcription terminator, leading to a reduced expression of downstream genes. Also displays a weak uracil phosphoribosyltransferase activity which is not physiologically significant. This chain is Bifunctional protein PyrR, found in Natranaerobius thermophilus (strain ATCC BAA-1301 / DSM 18059 / JW/NM-WN-LF).